The chain runs to 352 residues: Methylthioribose-1-phosphate isomerase (352 aa).

Substrate-binding positions include 49-51, Arg93, and Gln202; that span reads RGA. The Proton donor role is filled by Asp243. 253–254 lines the substrate pocket; sequence NK.

The protein belongs to the eIF-2B alpha/beta/delta subunits family. MtnA subfamily.

It carries out the reaction 5-(methylsulfanyl)-alpha-D-ribose 1-phosphate = 5-(methylsulfanyl)-D-ribulose 1-phosphate. The protein operates within amino-acid biosynthesis; L-methionine biosynthesis via salvage pathway; L-methionine from S-methyl-5-thio-alpha-D-ribose 1-phosphate: step 1/6. Catalyzes the interconversion of methylthioribose-1-phosphate (MTR-1-P) into methylthioribulose-1-phosphate (MTRu-1-P). The chain is Methylthioribose-1-phosphate isomerase from Magnetococcus marinus (strain ATCC BAA-1437 / JCM 17883 / MC-1).